Consider the following 308-residue polypeptide: Probable manganese-dependent inorganic pyrophosphatase (308 aa).

The Mn(2+) site is built by His9, Asp13, Asp15, Asp75, His97, and Asp149.

Belongs to the PPase class C family. It depends on Mn(2+) as a cofactor.

Its subcellular location is the cytoplasm. It carries out the reaction diphosphate + H2O = 2 phosphate + H(+). The chain is Probable manganese-dependent inorganic pyrophosphatase from Staphylococcus carnosus (strain TM300).